The primary structure comprises 925 residues: MEDRGICPRVLQVLFLVVLILISPVYAAKNDACTKCSCNPKGMVSCFELQEFPPLATFPRNTTTLHVSFSGEISIPSDILQHLEKLKYLTLNNNKIKNIAKFRVKNGYSSLITLSYTHNIIETIENGAFDDLQQLTQLDLSNNRLKEFPIFNKTSSVTKLYLRGNPGITKLPRQSLGNLPSLENLFMERTGIQEIPAGIFRQNTRLINLYFNKTKALERINEDAFDEDSSLKTLVLDETSVTSLPSRGLKNLHFLSLKDVPNFWQLPELDSIREVYLSPYNGFLCCEFESGEKYGKDCTMQKPSTEENNGQTTASSPTKEPATSGLGGGTHLSTQPHTTSGFGGGGFPGGGGGFPGGGGFPAGGSKTSTQPHTTSGFGGGGFPGGGGGFPGGGGFPAGGSKTSTQPHTTSGFGGGGFPGGGGGFPGGGGFPGGSNTSTQPHTTSNSGGGGFPGGGGFPGGGTPFTNQFTIPHIPNVHQSTADPPTLIPHSNHTPNGTQFHQCSKIPVQCVPKSDAFHPCEDIMGYVWLTVVSFMVGAVALVANLVVALVLLTSQRRLNVTRFLMCNLAFADFILGLYIFILTSVSAVTRGDYHNYVQQWQNGAGCKILGFLAVFSSELSLFTLVMMTIERFYAIVHAMHMNARLSFRKTVRFMIGGWIFALVMAVVPLTGVSGYSKVAICLPFDVSDATSTAYVAFLLLVNGASFISVMYLYSRMLYVVVSGGDMEGAPKRNDSKVAKRMAILVFTDMLCWAPIAFFGLLAAFGQTLLTVTQSKILLVFFFPINSICNPFLYAFFTKAFKRELFTALSRIGFCKFRALKYNGTLSSFLYSRSRRHHSTVNAEHSTPKSKHASTMSLRQSHQDLYRKESKTAESLNGICNAGFNAHEETRTSPGSVRYVRSLRGVTKSSSPPHLKLQKQKILQSPS.

The first 27 residues, 1–27 (MEDRGICPRVLQVLFLVVLILISPVYA), serve as a signal peptide directing secretion. Residues 28-529 (AKNDACTKCS…EDIMGYVWLT (502 aa)) are Extracellular-facing. Asn61 carries an N-linked (GlcNAc...) asparagine glycan. 8 LRR repeats span residues 85 to 106 (KLKYLTLNNNKIKNIAKFRVKN), 110 to 131 (SLITLSYTHNIIETIENGAFDD), 134 to 155 (QLTQLDLSNNRLKEFPIFNKTS), 156 to 180 (SVTKLYLRGNPGITKLPRQSLGNLP), 181 to 202 (SLENLFMERTGIQEIPAGIFRQ), 203 to 224 (NTRLINLYFNKTKALERINEDA), 230 to 250 (SLKTLVLDETSVTSLPSRGLK), and 251 to 273 (NLHFLSLKDVPNFWQLPELDSIR). The N-linked (GlcNAc...) asparagine glycan is linked to Asn152. An N-linked (GlcNAc...) asparagine glycan is attached at Asn212. Positions 299–493 (TMQKPSTEEN…PTLIPHSNHT (195 aa)) are disordered. Residues 301-318 (QKPSTEENNGQTTASSPT) are compositionally biased toward polar residues. One copy of the 1; truncated repeat lies at 333–349 (STQPHTTSGFGGGGFPG). Residues 333–461 (STQPHTTSGF…PGGGGFPGGG (129 aa)) form a 5 X approximate tandem repeats region. Positions 341 to 362 (GFGGGGFPGGGGGFPGGGGFPA) are enriched in gly residues. Repeat copies occupy residues 350-384 (GGGGFPGGGGFPAGGSKTSTQPHTTSGFGGGGFPG), 385-419 (GGGGFPGGGGFPAGGSKTSTQPHTTSGFGGGGFPG), and 420-453 (GGGGFPGGGGFPGGSNTSTQPHTTSNSGGGGFPG). A compositionally biased stretch (polar residues) spans 365–375 (SKTSTQPHTTS). A compositionally biased stretch (gly residues) spans 376 to 397 (GFGGGGFPGGGGGFPGGGGFPA). Over residues 400–410 (SKTSTQPHTTS) the composition is skewed to polar residues. Residues 411–432 (GFGGGGFPGGGGGFPGGGGFPG) are compositionally biased toward gly residues. Polar residues predominate over residues 434-445 (SNTSTQPHTTSN). N-linked (GlcNAc...) asparagine glycosylation occurs at Asn435. The span at 446–462 (SGGGGFPGGGGFPGGGT) shows a compositional bias: gly residues. The 5; truncated repeat unit spans residues 454-461 (GGGFPGGG). Positions 476–493 (VHQSTADPPTLIPHSNHT) are enriched in polar residues. Asn495 carries N-linked (GlcNAc...) asparagine glycosylation. A helical membrane pass occupies residues 530-551 (VVSFMVGAVALVANLVVALVLL). Over 552-561 (TSQRRLNVTR) the chain is Cytoplasmic. A helical transmembrane segment spans residues 562 to 584 (FLMCNLAFADFILGLYIFILTSV). Residues 585–606 (SAVTRGDYHNYVQQWQNGAGCK) lie on the Extracellular side of the membrane. The chain crosses the membrane as a helical span at residues 607–628 (ILGFLAVFSSELSLFTLVMMTI). Residues 629-651 (ERFYAIVHAMHMNARLSFRKTVR) are Cytoplasmic-facing. The chain crosses the membrane as a helical span at residues 652–673 (FMIGGWIFALVMAVVPLTGVSG). Topologically, residues 674-691 (YSKVAICLPFDVSDATST) are extracellular. The helical transmembrane segment at 692 to 712 (AYVAFLLLVNGASFISVMYLY) threads the bilayer. Residues 713–739 (SRMLYVVVSGGDMEGAPKRNDSKVAKR) lie on the Cytoplasmic side of the membrane. Residues 740 to 763 (MAILVFTDMLCWAPIAFFGLLAAF) traverse the membrane as a helical segment. Residues 764 to 774 (GQTLLTVTQSK) lie on the Extracellular side of the membrane. The chain crosses the membrane as a helical span at residues 775 to 795 (ILLVFFFPINSICNPFLYAFF). Residues 796 to 925 (TKAFKRELFT…QKQKILQSPS (130 aa)) lie on the Cytoplasmic side of the membrane. Residues 904 to 925 (VTKSSSPPHLKLQKQKILQSPS) are disordered.

It belongs to the G-protein coupled receptor 1 family. FSH/LSH/TSH subfamily.

It is found in the cell membrane. Functionally, probable receptor for a glycoprotein hormone. This is Probable glycoprotein hormone G-protein coupled receptor from Anthopleura elegantissima (Green aggregating anemone).